Reading from the N-terminus, the 930-residue chain is Isoleucine--tRNA ligase (930 aa).

The 'HIGH' region motif lies at proline 57 to histidine 67. Glutamate 554 contributes to the L-isoleucyl-5'-AMP binding site. The short motif at lysine 595–serine 599 is the 'KMSKS' region element. Lysine 598 serves as a coordination point for ATP. Zn(2+) is bound by residues cysteine 888, cysteine 891, cysteine 908, and cysteine 911.

This sequence belongs to the class-I aminoacyl-tRNA synthetase family. IleS type 1 subfamily. Monomer. Zn(2+) is required as a cofactor.

It localises to the cytoplasm. The catalysed reaction is tRNA(Ile) + L-isoleucine + ATP = L-isoleucyl-tRNA(Ile) + AMP + diphosphate. In terms of biological role, catalyzes the attachment of isoleucine to tRNA(Ile). As IleRS can inadvertently accommodate and process structurally similar amino acids such as valine, to avoid such errors it has two additional distinct tRNA(Ile)-dependent editing activities. One activity is designated as 'pretransfer' editing and involves the hydrolysis of activated Val-AMP. The other activity is designated 'posttransfer' editing and involves deacylation of mischarged Val-tRNA(Ile). The sequence is that of Isoleucine--tRNA ligase from Streptococcus pneumoniae serotype 19F (strain G54).